The chain runs to 292 residues: Acetylglutamate kinase (292 aa).

Substrate contacts are provided by residues 64–65, Arg86, and Asn190; that span reads GG.

Belongs to the acetylglutamate kinase family. ArgB subfamily.

It localises to the cytoplasm. It catalyses the reaction N-acetyl-L-glutamate + ATP = N-acetyl-L-glutamyl 5-phosphate + ADP. It participates in amino-acid biosynthesis; L-arginine biosynthesis; N(2)-acetyl-L-ornithine from L-glutamate: step 2/4. Catalyzes the ATP-dependent phosphorylation of N-acetyl-L-glutamate. The chain is Acetylglutamate kinase from Pelobacter propionicus (strain DSM 2379 / NBRC 103807 / OttBd1).